Consider the following 45-residue polypeptide: NLWQFGRVFVYPDVLCKGCYCGWGGRMDIYTYSRCCFVHDCCYGK.

3 residues coordinate Ca(2+): tyrosine 20, glycine 24, and glycine 25. A disulfide bridge connects residues cysteine 21 and cysteine 36. Residue histidine 39 is part of the active site. Position 40 (aspartate 40) interacts with Ca(2+).

Ca(2+) is required as a cofactor. As to expression, expressed by the venom gland.

It is found in the secreted. It catalyses the reaction a 1,2-diacyl-sn-glycero-3-phosphocholine + H2O = a 1-acyl-sn-glycero-3-phosphocholine + a fatty acid + H(+). In terms of biological role, PLA2 catalyzes the calcium-dependent hydrolysis of the 2-acyl groups in 3-sn-phosphoglycerides. The sequence is that of Phospholipase A2 3 from Bothrops diporus (Chaco lancehead).